A 757-amino-acid chain; its full sequence is Polyribonucleotide nucleotidyltransferase (757 aa).

Residues D489 and D495 each contribute to the Mg(2+) site. A KH domain is found at 556–615 (PKILCYKIDKDVVHKVIGSGGKTIRGISSDTSAKIDIDQNNYVYIMADTEEALMEAKTRV). Residues 632–700 (GELYDGKIVS…SDGKIKLTMR (69 aa)) enclose the S1 motif domain. The interval 702-757 (DEDRVGSGGSSSSPKKRFGAHPRKNGKDNRSNNSERGFNERSGSAEGSSISRKRFF) is disordered. Over residues 715 to 725 (PKKRFGAHPRK) the composition is skewed to basic residues. The segment covering 732–751 (SNNSERGFNERSGSAEGSSI) has biased composition (polar residues).

The protein belongs to the polyribonucleotide nucleotidyltransferase family. The cofactor is Mg(2+).

It localises to the cytoplasm. It carries out the reaction RNA(n+1) + phosphate = RNA(n) + a ribonucleoside 5'-diphosphate. In terms of biological role, involved in mRNA degradation. Catalyzes the phosphorolysis of single-stranded polyribonucleotides processively in the 3'- to 5'-direction. The chain is Polyribonucleotide nucleotidyltransferase from Neorickettsia sennetsu (strain ATCC VR-367 / Miyayama) (Ehrlichia sennetsu).